The primary structure comprises 83 residues: Small ribosomal subunit protein bS20 (83 aa).

A disordered region spans residues 60-83 (ASKGLIHKNKASRDKSRLAAKLAN).

It belongs to the bacterial ribosomal protein bS20 family.

Binds directly to 16S ribosomal RNA. In Streptococcus thermophilus (strain CNRZ 1066), this protein is Small ribosomal subunit protein bS20.